The sequence spans 448 residues: Histidinol dehydrogenase (448 aa).

Residues Tyr-136, Gln-197, and Asn-220 each coordinate NAD(+). Residues Ser-243, Gln-265, and His-268 each coordinate substrate. Positions 265 and 268 each coordinate Zn(2+). Catalysis depends on proton acceptor residues Glu-333 and His-334. Residues His-334, Asp-367, Glu-421, and His-426 each contribute to the substrate site. Asp-367 serves as a coordination point for Zn(2+). Zn(2+) is bound at residue His-426.

Belongs to the histidinol dehydrogenase family. Zn(2+) serves as cofactor.

The enzyme catalyses L-histidinol + 2 NAD(+) + H2O = L-histidine + 2 NADH + 3 H(+). Its pathway is amino-acid biosynthesis; L-histidine biosynthesis; L-histidine from 5-phospho-alpha-D-ribose 1-diphosphate: step 9/9. Its function is as follows. Catalyzes the sequential NAD-dependent oxidations of L-histidinol to L-histidinaldehyde and then to L-histidine. The protein is Histidinol dehydrogenase of Pseudomonas savastanoi pv. phaseolicola (strain 1448A / Race 6) (Pseudomonas syringae pv. phaseolicola (strain 1448A / Race 6)).